The chain runs to 184 residues: ATP synthase subunit delta (184 aa).

Belongs to the ATPase delta chain family. As to quaternary structure, F-type ATPases have 2 components, F(1) - the catalytic core - and F(0) - the membrane proton channel. F(1) has five subunits: alpha(3), beta(3), gamma(1), delta(1), epsilon(1). F(0) has three main subunits: a(1), b(2) and c(10-14). The alpha and beta chains form an alternating ring which encloses part of the gamma chain. F(1) is attached to F(0) by a central stalk formed by the gamma and epsilon chains, while a peripheral stalk is formed by the delta and b chains.

The protein localises to the cell membrane. Its function is as follows. F(1)F(0) ATP synthase produces ATP from ADP in the presence of a proton or sodium gradient. F-type ATPases consist of two structural domains, F(1) containing the extramembraneous catalytic core and F(0) containing the membrane proton channel, linked together by a central stalk and a peripheral stalk. During catalysis, ATP synthesis in the catalytic domain of F(1) is coupled via a rotary mechanism of the central stalk subunits to proton translocation. In terms of biological role, this protein is part of the stalk that links CF(0) to CF(1). It either transmits conformational changes from CF(0) to CF(1) or is implicated in proton conduction. The sequence is that of ATP synthase subunit delta from Christiangramia forsetii (strain DSM 17595 / CGMCC 1.15422 / KT0803) (Gramella forsetii).